A 700-amino-acid polypeptide reads, in one-letter code: Transketolase (700 aa).

The residue at position 2 (threonine 2) is an N-acetylthreonine. A substrate-binding site is contributed by histidine 45. Residues threonine 48, histidine 85, 133-135 (GPL), and leucine 135 each bind thiamine diphosphate. A Mg(2+)-binding site is contributed by aspartate 177. Thiamine diphosphate-binding residues include glycine 178 and asparagine 207. The Mg(2+) site is built by asparagine 207 and isoleucine 209. The substrate site is built by histidine 283, arginine 378, and serine 405. Histidine 283 is a binding site for thiamine diphosphate. Catalysis depends on glutamate 441, which acts as the Proton donor. Phenylalanine 467 is a binding site for thiamine diphosphate. Residues histidine 491, aspartate 499, and arginine 552 each contribute to the substrate site.

This sequence belongs to the transketolase family. Homodimer. Mg(2+) serves as cofactor. It depends on Ca(2+) as a cofactor. Mn(2+) is required as a cofactor. Requires Co(2+) as cofactor. The cofactor is thiamine diphosphate.

It carries out the reaction D-sedoheptulose 7-phosphate + D-glyceraldehyde 3-phosphate = aldehydo-D-ribose 5-phosphate + D-xylulose 5-phosphate. Functionally, catalyzes the reversible transfer of a two-carbon ketol group from sedoheptulose-7-phosphate to glyceraldehyde-3-phosphate, producing xylulose-5-phosphate and ribose-5-phosphate. Catalyzes the transfer of a two-carbon ketol group from a ketose donor to an aldose acceptor, via a covalent intermediate with the cofactor thiamine pyrophosphate. This Mycobacterium tuberculosis (strain ATCC 25618 / H37Rv) protein is Transketolase (tkt).